The following is a 278-amino-acid chain: Coiled-coil domain-containing protein 121 (278 aa).

2 coiled-coil regions span residues 1–30 (MTDL…REKL) and 105–243 (QAMR…LIQA). The disordered stretch occupies residues 253 to 278 (QCLNRQDVPKTTPSLPQGTKSRINPK).

The protein is Coiled-coil domain-containing protein 121 (CCDC121) of Homo sapiens (Human).